Here is a 319-residue protein sequence, read N- to C-terminus: Heavy metal-associated isoprenylated plant protein 9 (319 aa).

2 stretches are compositionally biased toward basic and acidic residues: residues 1–11 (MGEEVKPEAKE) and 24–45 (EEKK…KPKE). Positions 1-57 (MGEEVKPEAKEAASAPQAVPAEEEEKKKDVAEEKKVAAEEEKPKEEEEPQPPPPPPP) are disordered. A coiled-coil region spans residues 21 to 48 (AEEEEKKKDVAEEKKVAAEEEKPKEEEE). 2 consecutive HMA domains span residues 55-118 (PPPF…KRMA) and 144-208 (LTTV…KQAR). 4 residues coordinate a metal cation: Cys-66, Cys-69, Cys-155, and Cys-158. The tract at residues 207 to 282 (ARIVPQPDPE…RDNEMTAMAQ (76 aa)) is disordered. Basic and acidic residues predominate over residues 224-254 (QEEKKEESGEGNEKPPETGEEKEEEKKKEGE). A compositionally biased stretch (acidic residues) spans 255 to 268 (ENGEEGGGEEAAAT). Cys-316 bears the Cysteine methyl ester mark. Cys-316 is lipidated: S-farnesyl cysteine. Residues 317–319 (CIS) constitute a propeptide, removed in mature form.

Belongs to the HIPP family.

In terms of biological role, heavy-metal-binding protein. This Arabidopsis thaliana (Mouse-ear cress) protein is Heavy metal-associated isoprenylated plant protein 9.